Reading from the N-terminus, the 70-residue chain is Cold shock-like protein CspH (70 aa).

The region spanning 7–67 (GIVKTFDRKS…GLRGPTAANV (61 aa)) is the CSD domain.

The protein localises to the cytoplasm. The protein is Cold shock-like protein CspH (cspH) of Escherichia coli O6:H1 (strain CFT073 / ATCC 700928 / UPEC).